Here is a 195-residue protein sequence, read N- to C-terminus: Capsid protein (195 aa).

The segment at 148 to 195 (NAPILSTLPETTVVRRRGRSPRRRTPSPRRRRSQSPRRRRSASPASQC) is disordered. Residues 161–188 (VRRRGRSPRRRTPSPRRRRSQSPRRRRS) are compositionally biased toward basic residues. Phosphoserine; by host is present on residues Ser167, Ser174, and Ser182. Residues 167–172 (SPRRRT) form a 1; half-length repeat. Residues 167 to 188 (SPRRRTPSPRRRRSQSPRRRRS) form a 3 X 7 AA repeats of S-P-R-R-R-[PR]-S region. The Bipartite nuclear localization signal motif lies at 170–187 (RRTPSPRRRRSQSPRRRR). A run of 2 repeats spans residues 174 to 180 (SPRRRRS) and 182 to 188 (SPRRRRS). Residues 189–195 (ASPASQC) form an RNA binding region.

The protein belongs to the orthohepadnavirus core antigen family. In terms of assembly, homodimerizes, then multimerizes. Interacts with cytosol exposed regions of viral L glycoprotein present in the reticulum-to-Golgi compartment. Interacts with human FLNB. Phosphorylated form interacts with host importin alpha; this interaction depends on the exposure of the NLS, which itself depends upon genome maturation and/or phosphorylation of the capsid protein. Interacts with host NUP153. Post-translationally, phosphorylated by host SRPK1, SRPK2, and maybe protein kinase C or GAPDH. Phosphorylation is critical for pregenomic RNA packaging. Protein kinase C phosphorylation is stimulated by HBx protein and may play a role in transport of the viral genome to the nucleus at the late step during the viral replication cycle.

The protein localises to the virion. Its subcellular location is the host cytoplasm. Functionally, self assembles to form an icosahedral capsid. Most capsids appear to be large particles with an icosahedral symmetry of T=4 and consist of 240 copies of capsid protein, though a fraction forms smaller T=3 particles consisting of 180 capsid proteins. Entering capsids are transported along microtubules to the nucleus. Phosphorylation of the capsid is thought to induce exposure of nuclear localization signal in the C-terminal portion of the capsid protein that allows binding to the nuclear pore complex via the importin (karyopherin-) alpha and beta. Capsids are imported in intact form through the nuclear pore into the nuclear basket, where it probably binds NUP153. Only capsids that contain the mature viral genome can release the viral DNA and capsid protein into the nucleoplasm. Immature capsids get stuck in the basket. Capsids encapsulate the pre-genomic RNA and the P protein. Pre-genomic RNA is reverse-transcribed into DNA while the capsid is still in the cytoplasm. The capsid can then either be directed to the nucleus, providing more genomes for transcription, or bud through the endoplasmic reticulum to provide new virions. The chain is Capsid protein from Hepatitis B virus genotype G (isolate IG29227/2000) (HBV-G).